Reading from the N-terminus, the 636-residue chain is Receptor-like kinase LIP1 (636 aa).

The tract at residues 18-57 (NAPCTTNETNDDNVEHDEFRPPVVATTKRTEEREPAEQQP) is disordered. The Protein kinase domain maps to 74-352 (FRQECLLGEG…SDVMVALSFL (279 aa)). ATP is bound by residues 80–88 (LGEGGFGRV) and lysine 103. The active-site Proton acceptor is the aspartate 201. A phosphoserine mark is found at serine 205 and serine 236. Residue threonine 242 is modified to Phosphothreonine. Tyrosine 250 carries the post-translational modification Phosphotyrosine. A disordered region spans residues 389–636 (FCISRKDVGN…EEEHISSDHD (248 aa)). Residues 403–434 (SSDSEDEEEEKEQKAEKEEESTSKKRQEQEET) are a coiled coil. Basic and acidic residues predominate over residues 413–431 (KEQKAEKEEESTSKKRQEQ). Over residues 432–455 (EETATDSDDESDSNSEKDQEEEQS) the composition is skewed to acidic residues. Polar residues predominate over residues 480 to 489 (TNATAQSLKI). Composition is skewed to basic and acidic residues over residues 522–531 (DSGRDHDDSS) and 554–566 (HETR…DDSP). The segment covering 567–576 (RNTSMRINSL) has biased composition (polar residues). Composition is skewed to basic and acidic residues over residues 588–603 (NHQT…KSED) and 619–636 (SLHR…SDHD).

This sequence belongs to the protein kinase superfamily. Ser/Thr protein kinase family. As to quaternary structure, interacts with PRK6. Palmitoylated. In terms of tissue distribution, expressed in mature pollen and in germinating pollen tubes.

It is found in the cell membrane. Its subcellular location is the cytoplasm. Functionally, involved in pollen tube guidance into micropyle. Participates in perception of the ovule-secreted peptide signal LURE1. In Arabidopsis thaliana (Mouse-ear cress), this protein is Receptor-like kinase LIP1.